A 271-amino-acid polypeptide reads, in one-letter code: Formamidopyrimidine-DNA glycosylase (271 aa).

Pro2 acts as the Schiff-base intermediate with DNA in catalysis. Glu3 functions as the Proton donor in the catalytic mechanism. The active-site Proton donor; for beta-elimination activity is Lys57. DNA-binding residues include His90, Arg109, and Lys151. An FPG-type zinc finger spans residues His236 to Pro270. Arg260 functions as the Proton donor; for delta-elimination activity in the catalytic mechanism.

This sequence belongs to the FPG family. Monomer. The cofactor is Zn(2+).

It catalyses the reaction Hydrolysis of DNA containing ring-opened 7-methylguanine residues, releasing 2,6-diamino-4-hydroxy-5-(N-methyl)formamidopyrimidine.. It carries out the reaction 2'-deoxyribonucleotide-(2'-deoxyribose 5'-phosphate)-2'-deoxyribonucleotide-DNA = a 3'-end 2'-deoxyribonucleotide-(2,3-dehydro-2,3-deoxyribose 5'-phosphate)-DNA + a 5'-end 5'-phospho-2'-deoxyribonucleoside-DNA + H(+). Involved in base excision repair of DNA damaged by oxidation or by mutagenic agents. Acts as a DNA glycosylase that recognizes and removes damaged bases. Has a preference for oxidized purines, such as 7,8-dihydro-8-oxoguanine (8-oxoG). Has AP (apurinic/apyrimidinic) lyase activity and introduces nicks in the DNA strand. Cleaves the DNA backbone by beta-delta elimination to generate a single-strand break at the site of the removed base with both 3'- and 5'-phosphates. The protein is Formamidopyrimidine-DNA glycosylase of Shewanella oneidensis (strain ATCC 700550 / JCM 31522 / CIP 106686 / LMG 19005 / NCIMB 14063 / MR-1).